The sequence spans 271 residues: Mannosyl-3-phosphoglycerate phosphatase (271 aa).

The Nucleophile role is filled by Asp-13. Mg(2+) is bound by residues Asp-13, Asp-15, and Asp-214.

Belongs to the HAD-like hydrolase superfamily. MPGP family. Mg(2+) is required as a cofactor.

It is found in the cytoplasm. It carries out the reaction 2-O-(alpha-D-mannosyl)-3-phosphoglycerate + H2O = (2R)-2-O-(alpha-D-mannosyl)-glycerate + phosphate. In Shigella dysenteriae serotype 1 (strain Sd197), this protein is Mannosyl-3-phosphoglycerate phosphatase (yedP).